The chain runs to 481 residues: 3-isopropylmalate dehydratase large subunit (481 aa).

Residues C357, C417, and C420 each coordinate [4Fe-4S] cluster. Polar residues predominate over residues 429–441 (SPGQRCASTSNRN). Residues 429-451 (SPGQRCASTSNRNFEGRQGKGGR) are disordered.

Belongs to the aconitase/IPM isomerase family. LeuC type 1 subfamily. In terms of assembly, heterodimer of LeuC and LeuD. Requires [4Fe-4S] cluster as cofactor.

The catalysed reaction is (2R,3S)-3-isopropylmalate = (2S)-2-isopropylmalate. The protein operates within amino-acid biosynthesis; L-leucine biosynthesis; L-leucine from 3-methyl-2-oxobutanoate: step 2/4. Catalyzes the isomerization between 2-isopropylmalate and 3-isopropylmalate, via the formation of 2-isopropylmaleate. This is 3-isopropylmalate dehydratase large subunit from Mycobacterium sp. (strain KMS).